We begin with the raw amino-acid sequence, 235 residues long: Meiotically up-regulated gene 123 protein (235 aa).

Basic and acidic residues predominate over residues Met1–Tyr14. Disordered regions lie at residues Met1–Ser34, Pro58–Arg83, and Ser169–Asp235. Residues Ser15–Ser34 show a composition bias toward polar residues. Over residues Ser61–Lys77 the composition is skewed to low complexity. Polar residues predominate over residues Glu176 to Arg202. A phosphoserine mark is found at Ser180, Ser187, and Ser189. Thr191 is subject to Phosphothreonine.

It localises to the cytoplasm. The protein resides in the nucleus. In terms of biological role, involved in sporulation and has a role in meiosis. In Schizosaccharomyces pombe (strain 972 / ATCC 24843) (Fission yeast), this protein is Meiotically up-regulated gene 123 protein (mug123).